Consider the following 146-residue polypeptide: 3-dehydroquinate dehydratase (146 aa).

The active-site Proton acceptor is the Tyr-24. 3 residues coordinate substrate: Asn-73, His-79, and Asp-86. His-99 functions as the Proton donor in the catalytic mechanism. Substrate contacts are provided by residues 100 to 101 (LS) and Arg-110.

It belongs to the type-II 3-dehydroquinase family. Homododecamer.

The enzyme catalyses 3-dehydroquinate = 3-dehydroshikimate + H2O. The protein operates within metabolic intermediate biosynthesis; chorismate biosynthesis; chorismate from D-erythrose 4-phosphate and phosphoenolpyruvate: step 3/7. Functionally, catalyzes a trans-dehydration via an enolate intermediate. The chain is 3-dehydroquinate dehydratase from Shewanella baltica (strain OS223).